Reading from the N-terminus, the 310-residue chain is Ribosomal RNA large subunit methyltransferase F (310 aa).

The protein belongs to the methyltransferase superfamily. METTL16/RlmF family.

The protein localises to the cytoplasm. It catalyses the reaction adenosine(1618) in 23S rRNA + S-adenosyl-L-methionine = N(6)-methyladenosine(1618) in 23S rRNA + S-adenosyl-L-homocysteine + H(+). In terms of biological role, specifically methylates the adenine in position 1618 of 23S rRNA. The protein is Ribosomal RNA large subunit methyltransferase F of Pseudoalteromonas translucida (strain TAC 125).